The chain runs to 132 residues: UPF0102 protein LI0223 (132 aa).

It belongs to the UPF0102 family.

This chain is UPF0102 protein LI0223, found in Lawsonia intracellularis (strain PHE/MN1-00).